Here is a 787-residue protein sequence, read N- to C-terminus: MSAPIVETKKASKRRIRRIPDDQRQKVSSACDNCKKRKFKCSGEKPCFECSKKGHDCTYTIIDKRSLRGERMAKLKQKKDNNEKQRELVNEQIAQSSIIHPQITPVLPVPEYANVTYQDSSHSTVSGNDSYHLSSSSSIPQNLPAIVLPDTLRDPNNRGILTPGSTPNSVSSESSVSNVCVPKSLQPLLSFPLENKNNLRHKSEEPDMDNNTNNVPKKGGISNQEGKSAILLVDKSGAFRYMGETSPLSVLYEARGIFYEYVGSTKLTEDLRGCPVTDKPLKITMKEAAPLPHPSERDVYIERFKVNINGAYFVFDMDKFYEEIVDKVYENPNSDLVQENRVLLYFVLAIGSTYKDFSERNPQAEKGAHYFESGRLILRDLVEDSAMWCVLCHYLQFHYYESILKKSTALVHLTAAINYAQSLGLHRNFVNEQFSKLTAEYEYRRKLFRSLYISDRISSVFIGRPLIINDYDWDDPARFKNTNASVLPLDFNSKCHIELTRICTLVGRIVANFYQDKMIDVKKTKNLAIQLRLWSKGLDPELAFGNVLNPSQISNNEDNGNTVILLGIHILHLWAVMLLSRPFFMFEAISKINPEMRKSFEEEEELSKQLCQAATKASILAIKLMNHYINTTFHEIKRMECYVIITCCFYASIILGITILNGTFEEAGYTENDLMNSLKDAQYILSQFSVCNKGAERYSEINLDLISALVNRHKGKEVKPVVDNWSCNLFNDFNFGDTSGQNDVQTMMDFQQFFVSSDLIQFEEITDGTSSLPFDYNNYNLFFGDKL.

Positions 1–22 are disordered; the sequence is MSAPIVETKKASKRRIRRIPDD. Positions 31 to 57 form a DNA-binding region, zn(2)-C6 fungal-type; it reads CDNCKKRKFKCSGEKPCFECSKKGHDC. The stretch at 69-97 forms a coiled coil; it reads GERMAKLKQKKDNNEKQRELVNEQIAQSS. Disordered stretches follow at residues 120 to 140 and 200 to 221; these read SSHSTVSGNDSYHLSSSSSIP and RHKSEEPDMDNNTNNVPKKGGI. A compositionally biased stretch (polar residues) spans 209–221; sequence DNNTNNVPKKGGI.

The protein localises to the nucleus. In terms of biological role, transcription factor involved in yeast cell adherence to silicone substrate, filamentous growth, and biofilm formation. This Candida albicans (strain SC5314 / ATCC MYA-2876) (Yeast) protein is Filamentous growth regulator 27 (FGR27).